The chain runs to 150 residues: D-aminoacyl-tRNA deacylase (150 aa).

The Gly-cisPro motif, important for rejection of L-amino acids motif lies at 137–138; the sequence is GP.

Belongs to the DTD family. As to quaternary structure, homodimer.

It is found in the cytoplasm. The catalysed reaction is glycyl-tRNA(Ala) + H2O = tRNA(Ala) + glycine + H(+). It carries out the reaction a D-aminoacyl-tRNA + H2O = a tRNA + a D-alpha-amino acid + H(+). Its function is as follows. An aminoacyl-tRNA editing enzyme that deacylates mischarged D-aminoacyl-tRNAs. Also deacylates mischarged glycyl-tRNA(Ala), protecting cells against glycine mischarging by AlaRS. Acts via tRNA-based rather than protein-based catalysis; rejects L-amino acids rather than detecting D-amino acids in the active site. By recycling D-aminoacyl-tRNA to D-amino acids and free tRNA molecules, this enzyme counteracts the toxicity associated with the formation of D-aminoacyl-tRNA entities in vivo and helps enforce protein L-homochirality. The sequence is that of D-aminoacyl-tRNA deacylase from Listeria monocytogenes serotype 4b (strain CLIP80459).